The following is a 309-amino-acid chain: Acetolactate synthase small subunit, mitochondrial (309 aa).

Residues 1–24 (MLRSLLQSGHRRVVASSCATMVRC) constitute a mitochondrion transit peptide. The ACT domain occupies 79–159 (VLNCLVQNEP…DYTNSEIIKR (81 aa)).

Belongs to the acetolactate synthase small subunit family. As to quaternary structure, the acetolactate synthase complex contains the catalytic regulatory subunit ILV2 and the regulatory small subunit ILV6.

The protein localises to the mitochondrion. It functions in the pathway amino-acid biosynthesis; L-isoleucine biosynthesis; L-isoleucine from 2-oxobutanoate: step 1/4. It participates in amino-acid biosynthesis; L-valine biosynthesis; L-valine from pyruvate: step 1/4. Regulatory subunit of mitochondrial acetolactate synthase, which catalyzes the first of a series of common steps in the biosynthesis of the branched-chain amino acids. Stimulates activity of the acetolactate synthase catalytic subunit ILV2 seven- to tenfold and confers sensitivity to inhibition by valine and activation by ATP. This chain is Acetolactate synthase small subunit, mitochondrial (ILV6), found in Saccharomyces cerevisiae (strain ATCC 204508 / S288c) (Baker's yeast).